The chain runs to 325 residues: tRNA N6-adenosine threonylcarbamoyltransferase (325 aa).

Positions 110 and 114 each coordinate Fe cation. Substrate-binding positions include Met133–Gly137, Asp165, Gly178, and Asn268. Asp296 contacts Fe cation.

Belongs to the KAE1 / TsaD family. Fe(2+) serves as cofactor.

The protein localises to the cytoplasm. The enzyme catalyses L-threonylcarbamoyladenylate + adenosine(37) in tRNA = N(6)-L-threonylcarbamoyladenosine(37) in tRNA + AMP + H(+). Required for the formation of a threonylcarbamoyl group on adenosine at position 37 (t(6)A37) in tRNAs that read codons beginning with adenine. Is involved in the transfer of the threonylcarbamoyl moiety of threonylcarbamoyl-AMP (TC-AMP) to the N6 group of A37, together with TsaE and TsaB. TsaD likely plays a direct catalytic role in this reaction. This chain is tRNA N6-adenosine threonylcarbamoyltransferase, found in Thermosipho melanesiensis (strain DSM 12029 / CIP 104789 / BI429).